A 610-amino-acid chain; its full sequence is MLRSLLLRRSVGHSLGTLSPSSSTIRSSFSPHRTLCTTGQTLTPPPPPPPRPPPPPPATASEAQFRKYAGYAALAIFSGVATYFSFPFPENAKHKKAQIFRYAPLPEDLHTVSNWSGTHEVQTRNFNQPENLADLEALVKESHEKKLRIRPVGSGLSPNGIGLSRSGMVNLALMDKVLEVDKEKKRVTVQAGIRVQQLVDAIKDYGLTLQNFASIREQQIGGIIQVGAHGTGARLPPIDEQVISMKLVTPAKGTIELSREKDPELFHLARCGLGGLGVVAEVTLQCVARHELVEHTYVSNLQEIKKNHKKLLSANKHVKYLYIPYTDTVVVVTCNPVSKWSGPPKDKPKYTTDEAVQHVRDLYRESIVKYRVQDSGKKSPDSSEPDIQELSFTELRDKLLALDPLNDVHVAKVNQAEAEFWKKSEGYRVGWSDEILGFDCGGQQWVSESCFPAGTLANPSMKDLEYIEELKKLIEKEAIPAPAPIEQRWTARSKSPISPAFSTSEDDIFSWVGIIMYLPTADPRQRKDITDEFFHYRHLTQKQLWDQFSAYEHWAKIEIPKDKEELEALQARIRKRFPVDAYNKARRELDPNRILSNNMVEKLFPVSTTA.

Residues 1–35 (MLRSLLLRRSVGHSLGTLSPSSSTIRSSFSPHRTL) constitute a mitochondrion transit peptide. The segment at 17 to 61 (TLSPSSSTIRSSFSPHRTLCTTGQTLTPPPPPPPRPPPPPPATAS) is disordered. A compositionally biased stretch (low complexity) spans 19 to 30 (SPSSSTIRSSFS). A propeptide spans 36–101 (CTTGQTLTPP…AKHKKAQIFR (66 aa)) (removed in mature form). Positions 43-58 (TPPPPPPPRPPPPPPA) are enriched in pro residues. A helical membrane pass occupies residues 68-84 (YAGYAALAIFSGVATYF). One can recognise an FAD-binding PCMH-type domain in the interval 123–258 (TRNFNQPENL…TPAKGTIELS (136 aa)).

The cofactor is FAD.

The protein localises to the mitochondrion membrane. It carries out the reaction L-galactono-1,4-lactone + 4 Fe(III)-[cytochrome c] = L-dehydroascorbate + 4 Fe(II)-[cytochrome c] + 5 H(+). It catalyses the reaction L-gulono-1,4-lactone + 2 Fe(III)-[cytochrome c] = L-ascorbate + 2 Fe(II)-[cytochrome c] + 3 H(+). It functions in the pathway cofactor biosynthesis; L-ascorbate biosynthesis. Involved in the biosynthesis of ascorbate. Catalyzes the final step of ascorbate biosynthesis. Uses L-galactono-1,4-lactone and L-gulono-1,4-lactone as substrates, but not D-galactono-1,4-lactone, D-gulono-1,4-lactone, L-mannono-1,4-lactone or D-galactonic acid. Also active with phenazine methosulfate and 1,4-benzoquinone as electron acceptors. Involved in the regulation of the accumulation of the mitochondrial respiratory complex I. Structural part of one of the plant-specific mitochondrial complex I assembly intermediates, lacking the whole distal (PD) module. Prevents the binding of the plant specific P1 protein (CPN60/HSP60), responsible for the linkage of the proximal (PP) to the distal (PD) module. This Arabidopsis thaliana (Mouse-ear cress) protein is L-galactono-1,4-lactone dehydrogenase, mitochondrial.